Reading from the N-terminus, the 37-residue chain is Large ribosomal subunit protein bL36 (37 aa).

It belongs to the bacterial ribosomal protein bL36 family.

The polypeptide is Large ribosomal subunit protein bL36 (Synechococcus sp. (strain CC9605)).